The chain runs to 930 residues: Polypeptide N-acetylgalactosaminyltransferase 5 (930 aa).

The Cytoplasmic segment spans residues 1-12 (MNKIRKFFRGSG). The chain crosses the membrane as a helical; Signal-anchor for type II membrane protein span at residues 13–35 (RVLAFIFAASVIWLLFDMAALRL). Residues 36 to 930 (SFSEINAGLL…KWKFEKYYEV (895 aa)) lie on the Lumenal side of the membrane. Positions 190–209 (KQEAPQNYNVSSDTSKQASE) are disordered. The span at 193–209 (APQNYNVSSDTSKQASE) shows a compositional bias: polar residues. Residues Asn198, Asn213, and Asn283 are each glycosylated (N-linked (GlcNAc...) asparagine). Ser285 carries the phosphoserine modification. N-linked (GlcNAc...) asparagine glycans are attached at residues Asn287, Asn309, Asn355, and Asn387. Residues 327 to 381 (DTKEVPNSKTQTVFPKLLGGSPHKQIPRNQSKTSSSPPALKKAVSQSKPTISGGL) form a disordered region. Residues 353–363 (PRNQSKTSSSP) show a composition bias toward polar residues. 3 disulfides stabilise this stretch: Cys476–Cys708, Cys699–Cys779, and Cys812–Cys825. A catalytic subdomain A region spans residues 485–594 (LPTTSIIMCF…VGWLEPLLER (110 aa)). 2 residues coordinate substrate: Asp526 and Arg555. Asn568 carries N-linked (GlcNAc...) asparagine glycosylation. Asp578 provides a ligand contact to Mn(2+). Ser579 is a substrate binding site. Residue His580 coordinates Mn(2+). The catalytic subdomain B stretch occupies residues 654 to 716 (IIRCPVMAGG…PCSRVGHIFR (63 aa)). Trp685 serves as a coordination point for substrate. His713 lines the Mn(2+) pocket. Positions 716 and 721 each coordinate substrate. Asn766, Asn817, and Asn835 each carry an N-linked (GlcNAc...) asparagine glycan. The Ricin B-type lectin domain maps to 794–925 (KAPVVRASGV…MELQQKWKFE (132 aa)). 2 disulfide bridges follow: Cys848–Cys863 and Cys898–Cys913. An N-linked (GlcNAc...) asparagine glycan is attached at Asn902.

It belongs to the glycosyltransferase 2 family. GalNAc-T subfamily. As to quaternary structure, interacts with EXT2. Does not interact with EXT1, EXTL1 or EXTL3. Mn(2+) is required as a cofactor. Expressed at low level. Not expressed before E7.5 during embryogenesis. Expressed in dental mesenchyme and tongue. Accumulates in a subset of mesenchymal cells at the ventral-most portions of the 12.5 dpc maxilla and mandible underlying the dental lamina.

The protein resides in the golgi apparatus membrane. The catalysed reaction is L-seryl-[protein] + UDP-N-acetyl-alpha-D-galactosamine = a 3-O-[N-acetyl-alpha-D-galactosaminyl]-L-seryl-[protein] + UDP + H(+). It carries out the reaction L-threonyl-[protein] + UDP-N-acetyl-alpha-D-galactosamine = a 3-O-[N-acetyl-alpha-D-galactosaminyl]-L-threonyl-[protein] + UDP + H(+). It functions in the pathway protein modification; protein glycosylation. Its function is as follows. Catalyzes the initial reaction in O-linked oligosaccharide biosynthesis, the transfer of an N-acetyl-D-galactosamine residue to a serine or threonine residue on the protein receptor. Has activity toward EA2 peptide substrate, but has a weak activity toward Muc2 or Muc1b substrates. This chain is Polypeptide N-acetylgalactosaminyltransferase 5 (Galnt5), found in Mus musculus (Mouse).